Here is a 133-residue protein sequence, read N- to C-terminus: ATP synthase epsilon chain (133 aa).

The protein belongs to the ATPase epsilon chain family. In terms of assembly, F-type ATPases have 2 components, CF(1) - the catalytic core - and CF(0) - the membrane proton channel. CF(1) has five subunits: alpha(3), beta(3), gamma(1), delta(1), epsilon(1). CF(0) has three main subunits: a, b and c.

It localises to the cell membrane. In terms of biological role, produces ATP from ADP in the presence of a proton gradient across the membrane. This chain is ATP synthase epsilon chain, found in Geobacillus thermodenitrificans (strain NG80-2).